We begin with the raw amino-acid sequence, 445 residues long: Cytoplasmic tRNA 2-thiolation protein 2 (445 aa).

Over residues 1 to 11 (MCSIGEDDFGD) the composition is skewed to acidic residues. The segment at 1–26 (MCSIGEDDFGDEGGVHAMKEESPLPE) is disordered. Positions 13 to 22 (GGVHAMKEES) are enriched in basic and acidic residues.

Belongs to the CTU2/NCS2 family.

The protein resides in the cytoplasm. It participates in tRNA modification; 5-methoxycarbonylmethyl-2-thiouridine-tRNA biosynthesis. In terms of biological role, plays a central role in 2-thiolation of mcm(5)S(2)U at tRNA wobble positions of tRNA(Lys), tRNA(Glu) and tRNA(Gln). May act by forming a heterodimer with NCS6/CTU1 that ligates sulfur from thiocarboxylated URM1 onto the uridine of tRNAs at wobble position. This is Cytoplasmic tRNA 2-thiolation protein 2 from Aedes aegypti (Yellowfever mosquito).